A 74-amino-acid polypeptide reads, in one-letter code: Antimicrobial peptide AcrAP1 (74 aa).

Positions 1–22 (MEIKYLLTVFLVLLIVSDHCQA) are cleaved as a signal peptide. Lys40 carries the post-translational modification Lysine amide. A propeptide spanning residues 46–74 (DLDGQIDRFRNFRKRDAELEELLSKLPIY) is cleaved from the precursor.

This sequence belongs to the non-disulfide-bridged peptide (NDBP) superfamily. Short antimicrobial peptide (group 4) family. Expressed by the venom gland.

The protein resides in the secreted. Its subcellular location is the target cell membrane. Its function is as follows. Has antimicrobial activity against the Gram-positive bacteria S.aureus (MIC=8 uM) and the yeast C.albicans (MIC=16 uM). Causes hemolysis on horse erythrocytes (64 uM for 100% hemolysis). Minimum bactericidal concentrations have also been tested against S.aureus and is four-fold higher (MBC=32 uM). This chain is Antimicrobial peptide AcrAP1, found in Androctonus crassicauda (Arabian fat-tailed scorpion).